Here is a 115-residue protein sequence, read N- to C-terminus: Large ribosomal subunit protein bL19 (115 aa).

It belongs to the bacterial ribosomal protein bL19 family.

This protein is located at the 30S-50S ribosomal subunit interface and may play a role in the structure and function of the aminoacyl-tRNA binding site. This is Large ribosomal subunit protein bL19 from Clostridium perfringens (strain ATCC 13124 / DSM 756 / JCM 1290 / NCIMB 6125 / NCTC 8237 / Type A).